Consider the following 428-residue polypeptide: Dihydroorotase (428 aa).

Histidine 59 and histidine 61 together coordinate Zn(2+). Substrate contacts are provided by residues 61 to 63 and asparagine 93; that span reads HLR. Residues aspartate 151, histidine 178, and histidine 231 each coordinate Zn(2+). Asparagine 277 is a binding site for substrate. Residue aspartate 304 participates in Zn(2+) binding. Aspartate 304 is an active-site residue. Residues histidine 308 and 322 to 323 contribute to the substrate site; that span reads FG.

The protein belongs to the metallo-dependent hydrolases superfamily. DHOase family. Class I DHOase subfamily. It depends on Zn(2+) as a cofactor.

It catalyses the reaction (S)-dihydroorotate + H2O = N-carbamoyl-L-aspartate + H(+). The protein operates within pyrimidine metabolism; UMP biosynthesis via de novo pathway; (S)-dihydroorotate from bicarbonate: step 3/3. In terms of biological role, catalyzes the reversible cyclization of carbamoyl aspartate to dihydroorotate. The chain is Dihydroorotase from Bacillus cereus (strain ATCC 14579 / DSM 31 / CCUG 7414 / JCM 2152 / NBRC 15305 / NCIMB 9373 / NCTC 2599 / NRRL B-3711).